The sequence spans 298 residues: ADP/ATP translocase 1 (298 aa).

The Mitochondrial intermembrane segment spans residues 1–7; the sequence is MGDHAWS. At glycine 2 the chain carries N-acetylglycine. One copy of the Solcar 1 repeat lies at 6 to 98; sequence WSFLKDFLAG…FAFKDKYKQL (93 aa). At serine 7 the chain carries Phosphoserine. Residues 8-37 form a helical membrane-spanning segment; it reads FLKDFLAGGVAAAVSKTAVAPIERVKLLLQ. Over 38–74 the chain is Mitochondrial matrix; the sequence is VQHASKQISAEKQYKGIIDCVVRIPKEQGFLSFWRGN. An N6,N6,N6-trimethyllysine modification is found at lysine 52. A helical membrane pass occupies residues 75-99; that stretch reads LANVIRYFPTQALNFAFKDKYKQLF. Residues arginine 80 and lysine 92 each coordinate ADP. Residues 100–109 are Mitochondrial intermembrane-facing; it reads LGGVDRHKQF. A helical membrane pass occupies residues 110–130; that stretch reads WRYFAGNLASGGAAGATSLCF. Solcar repeat units lie at residues 111–201 and 212–297; these read RYFA…AKGM and VSWM…IKKY. Residues 131 to 178 are Mitochondrial matrix-facing; it reads VYPLDFARTRLAADVGKGAAQREFHGLGDCIIKIFKSDGLRGLYQGFN. Lysine 147 bears the N6-succinyllysine mark. At cysteine 160 the chain carries S-nitrosocysteine. The chain crosses the membrane as a helical span at residues 179 to 199; that stretch reads VSVQGIIIYRAAYFGVYDTAK. At 200–210 the chain is on the mitochondrial intermembrane side; the sequence is GMLPDPKNVHI. The helical transmembrane segment at 211–231 threads the bilayer; that stretch reads FVSWMIAQSVTAVAGLVSYPF. Over 232 to 273 the chain is Mitochondrial matrix; it reads DTVRRRMMMQSGRKGADIMYTGTVDCWRKIAKDEGAKAFFKG. Arginine 235 is a binding site for ADP. The segment at 235–240 is important for transport activity; the sequence is RRRMMM. Residues 235–240 carry the Nucleotide carrier signature motif motif; the sequence is RRRMMM. Residues lysine 245 and lysine 272 each carry the N6-succinyllysine modification. Residues 274–291 form a helical membrane-spanning segment; it reads AWSNVLRGMGGAFVLVLY. Over 292–298 the chain is Mitochondrial intermembrane; it reads DEIKKYV.

This sequence belongs to the mitochondrial carrier (TC 2.A.29) family. Monomer. Found in a complex with ARL2, ARL2BP and SLC25A4/ANT1. Interacts with ARL2BP. Interacts with ARHGAP11B, thereby inhibiting the mitochondrial permeability transition pore (mPTP). Interacts with TIMM44; leading to inhibit the presequence translocase TIMM23, thereby promoting stabilization of PINK1. In terms of assembly, (Microbial infection) Interacts with HIV-1 Vpr. In terms of processing, under cell death induction, transglutaminated by TGM2. Transglutamination leads to formation of covalent cross-links between a glutamine and the epsilon-amino group of a lysine residue, forming polymers. As to expression, expressed in erythrocytes (at protein level).

It is found in the mitochondrion inner membrane. The protein localises to the membrane. The catalysed reaction is ADP(in) + ATP(out) = ADP(out) + ATP(in). The enzyme catalyses H(+)(in) = H(+)(out). With respect to regulation, the matrix-open state (m-state) is inhibited by the membrane-permeable bongkrekic acid (BKA). The cytoplasmic-open state (c-state) is inhibited by the membrane-impermeable toxic inhibitor carboxyatractyloside (CATR). Proton transporter activity is inhibited by ADP:ATP antiporter activity. Functionally, ADP:ATP antiporter that mediates import of ADP into the mitochondrial matrix for ATP synthesis, and export of ATP out to fuel the cell. Cycles between the cytoplasmic-open state (c-state) and the matrix-open state (m-state): operates by the alternating access mechanism with a single substrate-binding site intermittently exposed to either the cytosolic (c-state) or matrix (m-state) side of the inner mitochondrial membrane. In addition to its ADP:ATP antiporter activity, also involved in mitochondrial uncoupling and mitochondrial permeability transition pore (mPTP) activity. Plays a role in mitochondrial uncoupling by acting as a proton transporter: proton transport uncouples the proton flows via the electron transport chain and ATP synthase to reduce the efficiency of ATP production and cause mitochondrial thermogenesis. Proton transporter activity is inhibited by ADP:ATP antiporter activity, suggesting that SLC25A4/ANT1 acts as a master regulator of mitochondrial energy output by maintaining a delicate balance between ATP production (ADP:ATP antiporter activity) and thermogenesis (proton transporter activity). Proton transporter activity requires free fatty acids as cofactor, but does not transport it. Also plays a key role in mPTP opening, a non-specific pore that enables free passage of the mitochondrial membranes to solutes of up to 1.5 kDa, and which contributes to cell death. It is however unclear if SLC25A4/ANT1 constitutes a pore-forming component of mPTP or regulates it. Acts as a regulator of mitophagy independently of ADP:ATP antiporter activity: promotes mitophagy via interaction with TIMM44, leading to inhibit the presequence translocase TIMM23, thereby promoting stabilization of PINK1. This Homo sapiens (Human) protein is ADP/ATP translocase 1.